The primary structure comprises 464 residues: Glycine receptor subunit alpha-3 (464 aa).

The signal sequence occupies residues 1-33; that stretch reads MAHVRHFRTLVSGFYFWEAALLLSLVATKETDS. The Extracellular segment spans residues 34–255; the sequence is ARSRSAPMSP…RFHLERQMGY (222 aa). The N-linked (GlcNAc...) asparagine glycan is linked to N71. C171 and C185 are oxidised to a cystine. Residues E225 and D227 each contribute to the Zn(2+) site. C231 and C242 are disulfide-bonded. Residue 235–240 participates in strychnine binding; sequence YNTGKF. H248 provides a ligand contact to Zn(2+). A helical transmembrane segment spans residues 256 to 277; that stretch reads YLIQMYIPSLLIVILSWVSFWI. Residues 278-282 lie on the Cytoplasmic side of the membrane; the sequence is NMDAA. The helical transmembrane segment at 283–303 threads the bilayer; the sequence is PARVALGITTVLTMTTQSSGS. The Extracellular segment spans residues 304-314; sequence RASLPKVSYVK. The chain crosses the membrane as a helical span at residues 315 to 335; it reads AIDIWMAVCLLFVFSALLEYA. Residues 336–430 lie on the Cytoplasmic side of the membrane; the sequence is AVNFVSRQHK…FIDRAKKIDT (95 aa). Residues S370 and S379 each carry the phosphoserine modification. A helical transmembrane segment spans residues 431-451; it reads ISRACFPLAFLIFNIFYWVIY. The Extracellular segment spans residues 452–464; that stretch reads KILRHEDIHQQQD.

Belongs to the ligand-gated ion channel (TC 1.A.9) family. Glycine receptor (TC 1.A.9.3) subfamily. GLRA3 sub-subfamily. In terms of assembly, homopentamer (in vitro). Heteropentamer composed of GLRA3 and GLRB. Both homopentamers and heteropentamers form functional ion channels, but their characteristics are subtly different. Post-translationally, phosphorylated by PKA; this causes down-regulation of channel activity. Widely distributed throughout the central nervous system.

It is found in the postsynaptic cell membrane. The protein localises to the perikaryon. It localises to the cell projection. The protein resides in the dendrite. Its subcellular location is the synapse. It is found in the cell membrane. The catalysed reaction is chloride(in) = chloride(out). Its function is as follows. Glycine receptors are ligand-gated chloride channels. Channel opening is triggered by extracellular glycine. Channel characteristics depend on the subunit composition; heteropentameric channels display faster channel closure. Plays an important role in the down-regulation of neuronal excitability. Contributes to the generation of inhibitory postsynaptic currents. Contributes to increased pain perception in response to increased prostaglandin E2 levels. Plays a role in cellular responses to ethanol. In Homo sapiens (Human), this protein is Glycine receptor subunit alpha-3 (GLRA3).